The primary structure comprises 364 residues: UDP-N-acetylglucosamine--N-acetylmuramyl-(pentapeptide) pyrophosphoryl-undecaprenol N-acetylglucosamine transferase 1 (364 aa).

UDP-N-acetyl-alpha-D-glucosamine contacts are provided by residues 10–12 (TGG), Asn-124, Ser-195, Ile-250, and Gln-295.

This sequence belongs to the glycosyltransferase 28 family. MurG subfamily.

Its subcellular location is the cell membrane. It catalyses the reaction di-trans,octa-cis-undecaprenyl diphospho-N-acetyl-alpha-D-muramoyl-L-alanyl-D-glutamyl-meso-2,6-diaminopimeloyl-D-alanyl-D-alanine + UDP-N-acetyl-alpha-D-glucosamine = di-trans,octa-cis-undecaprenyl diphospho-[N-acetyl-alpha-D-glucosaminyl-(1-&gt;4)]-N-acetyl-alpha-D-muramoyl-L-alanyl-D-glutamyl-meso-2,6-diaminopimeloyl-D-alanyl-D-alanine + UDP + H(+). The protein operates within cell wall biogenesis; peptidoglycan biosynthesis. Functionally, cell wall formation. Catalyzes the transfer of a GlcNAc subunit on undecaprenyl-pyrophosphoryl-MurNAc-pentapeptide (lipid intermediate I) to form undecaprenyl-pyrophosphoryl-MurNAc-(pentapeptide)GlcNAc (lipid intermediate II). This chain is UDP-N-acetylglucosamine--N-acetylmuramyl-(pentapeptide) pyrophosphoryl-undecaprenol N-acetylglucosamine transferase 1, found in Bacillus cereus (strain ATCC 10987 / NRS 248).